The sequence spans 1326 residues: F-box/WD repeat-containing protein 7 (1326 aa).

Disordered stretches follow at residues 1–58 (MERG…AEVG), 123–187 (DSSS…IEDE), 318–351 (TVSN…ALSR), 399–549 (GSKA…SGCS), 615–642 (RSNP…RNGS), and 797–843 (TPRS…NPPP). Residues 9-39 (SSESVTSAGERTQSAVTSSTSTWVKSQASTS) show a composition bias toward polar residues. Residues 165–187 (NDDDDDEEPEPEEDDEEELIEDE) show a composition bias toward acidic residues. The span at 320–348 (SNPSPAASANAAAPEEASTSNSSSTSSSA) shows a compositional bias: low complexity. Polar residues predominate over residues 403-464 (ANGSGTANSD…KLNLGSSLGA (62 aa)). The span at 465–486 (SSCSQHRSGSSSTSKSMESSTS) shows a compositional bias: low complexity. Over residues 495 to 504 (VYTNTNSNDY) the composition is skewed to polar residues. Composition is skewed to low complexity over residues 510–520 (TTSGSSTSGGS), 528–546 (NVSA…SQES), and 616–631 (SNPP…GANP). Polar residues-rich tracts occupy residues 632–642 (TASVRQRRNGS) and 797–824 (TPRS…STPG). Thr813 carries the post-translational modification Phosphothreonine. Phosphoserine is present on Ser825. An F-box domain is found at 889 to 935 (RDFISLLPRELALFVLSYLEPKDLLRAAQTCRSWRFLCDDNLLWKEK). WD repeat units lie at residues 992–1030 (GHDD…CLRT), 1033–1070 (GHTG…CVHT), 1073–1110 (GHTS…CLHV), 1113–1150 (GHLA…CLHT), 1153–1190 (GHTN…CKHT), 1193–1232 (GHQS…QTLS), and 1236–1273 (KHHS…FIRN).

Part of a SCF E3 ubiquitin-protein ligase complex. Interacts with Myc and puf. Interacts with CycE. As to expression, expressed in follicle cell epithelium and imaginal disks, particularly in the morphogenetic furrow.

The protein resides in the nucleus. Its pathway is protein modification; protein ubiquitination. Substrate recognition component of a SCF (SKP1-CUL1-F-box protein) E3 ubiquitin-protein ligase complex which mediates the ubiquitination and subsequent proteasomal degradation of target proteins. Probably recognizes and binds to phosphorylated target proteins. In the wing and eye, negatively regulates cell growth and proliferation by mediating the degradation of Myc and cyclin E, respectively. Required for endocycles, but not mitosis in follicle cell epithelium. This is F-box/WD repeat-containing protein 7 from Drosophila melanogaster (Fruit fly).